A 27-amino-acid polypeptide reads, in one-letter code: uncharacterized protein (27 aa).

The protein localises to the plastid. It is found in the chloroplast. This is an uncharacterized protein from Anthoceros angustus (Hornwort).